Consider the following 331-residue polypeptide: Major outer membrane protein P.IB (331 aa).

An N-terminal signal peptide occupies residues 1–19; that stretch reads MKKSLIALTLAALPVAAMA.

This sequence belongs to the Gram-negative porin family. In terms of assembly, homotrimer.

The protein localises to the cell outer membrane. In terms of biological role, serves as a slightly cation selective porin. The chain is Major outer membrane protein P.IB (porB) from Neisseria meningitidis serogroup B.